The sequence spans 621 residues: Chaperone protein HtpG (621 aa).

The interval 1-328 is a; substrate-binding; the sequence is MIQEKKKFDA…SEDLPLNISR (328 aa). Residues 329 to 544 form a b region; it reads ESLQHNSVLE…DAAMDIRMER (216 aa). The disordered stretch occupies residues 475–494; the sequence is SDIDVEQTTSQSEAKNTDSK. The interval 545-621 is c; sequence FLIEQKQIAN…LNDIVQKAIL (77 aa).

It belongs to the heat shock protein 90 family. In terms of assembly, homodimer.

The protein resides in the cytoplasm. Functionally, molecular chaperone. Has ATPase activity. This Rickettsia rickettsii (strain Iowa) protein is Chaperone protein HtpG.